We begin with the raw amino-acid sequence, 61 residues long: Transmembrane protein 300R (61 aa).

Helical transmembrane passes span 5–25 and 35–55; these read FLDL…FYLT and SLSY…IYLQ.

The protein localises to the membrane. The protein is Transmembrane protein 300R of Invertebrate iridescent virus 6 (IIV-6).